Here is a 350-residue protein sequence, read N- to C-terminus: Bifunctional methylenetetrahydrofolate dehydrogenase/cyclohydrolase, mitochondrial (350 aa).

A mitochondrion-targeting transit peptide spans 1 to 35 (MASVSLLSALAVRLLRPTHGCHPRLQPFHLAAVRN). The residue at position 50 (K50) is an N6-acetyllysine; alternate. Residue K50 forms a Glycyl lysine isopeptide (Lys-Gly) (interchain with G-Cter in SUMO2); alternate linkage. Substrate-binding positions include 84 to 88 (YVLNK) and 131 to 133 (VQL). NAD(+) contacts are provided by residues 200–202 (GRS) and R233. Residue 309–313 (PGGVG) coordinates substrate.

Belongs to the tetrahydrofolate dehydrogenase/cyclohydrolase family. Homodimer. Mg(2+) serves as cofactor.

Its subcellular location is the mitochondrion. The enzyme catalyses (6R)-5,10-methylene-5,6,7,8-tetrahydrofolate + NAD(+) = (6R)-5,10-methenyltetrahydrofolate + NADH. It catalyses the reaction (6R)-5,10-methenyltetrahydrofolate + H2O = (6R)-10-formyltetrahydrofolate + H(+). In terms of biological role, although its dehydrogenase activity is NAD-specific, it can also utilize NADP at a reduced efficiency. The polypeptide is Bifunctional methylenetetrahydrofolate dehydrogenase/cyclohydrolase, mitochondrial (Mthfd2) (Mus musculus (Mouse)).